A 272-amino-acid polypeptide reads, in one-letter code: ATP-dependent Clp protease proteolytic subunit, mitochondrial (272 aa).

A mitochondrion-targeting transit peptide spans M1 to F52. S149 (nucleophile) is an active-site residue. Residue H174 is part of the active site. K196 is modified (N6-succinyllysine). K207 bears the N6-acetyllysine mark. The disordered stretch occupies residues V240 to T272.

This sequence belongs to the peptidase S14 family. Fourteen CLPP subunits assemble into 2 heptameric rings which stack back to back to give a disk-like structure with a central cavity. Component of the ClpXP complex formed by the assembly of two CLPP heptameric rings with two CLPX hexameric rings, giving rise to a symmetrical structure with two central CLPP rings flanked by a CLPX ring at either end of the complex. As to expression, detected in liver (at protein level). High levels found in heart, liver and skeletal muscle.

The protein localises to the mitochondrion matrix. It carries out the reaction Hydrolysis of proteins to small peptides in the presence of ATP and magnesium. alpha-casein is the usual test substrate. In the absence of ATP, only oligopeptides shorter than five residues are hydrolyzed (such as succinyl-Leu-Tyr-|-NHMec, and Leu-Tyr-Leu-|-Tyr-Trp, in which cleavage of the -Tyr-|-Leu- and -Tyr-|-Trp bonds also occurs).. In terms of biological role, protease component of the ClpXP complex that cleaves peptides and various proteins in an ATP-dependent process. Has low peptidase activity in the absence of CLPX. The ClpXP complex can degrade CSN1S1, CSN2 and CSN3, as well as synthetic peptides (in vitro) and may be responsible for a fairly general and central housekeeping function rather than for the degradation of specific substrates. Cleaves PINK1 in the mitochondrion. This chain is ATP-dependent Clp protease proteolytic subunit, mitochondrial, found in Mus musculus (Mouse).